The chain runs to 124 residues: PLSAADKTIIKHLTGSVRTNAEAWGAESLARLFATSPSTKTYFSKFNDFTANGKRLHGGKVLNAVADVTDHLDNLAVLHGTTLLVDPHNFPLLSQSLLVTLAAHLLALDKFLDEVAKALSSHYR.

Positions 1–124 constitute a Globin domain; that stretch reads PLSAADKTII…VAKALSSHYR (124 aa). His-57 lines the O2 pocket. His-79 lines the heme b pocket.

This sequence belongs to the globin family. As to quaternary structure, hb 1 is a heterotetramer of two alpha and two beta-1 chains. Hb 2 is a heterotetramer of two alpha and two beta-2 chains. Hb 3 is a heterotetramer of two alpha and two beta-3 chains. Red blood cells (at protein level).

Functionally, involved in oxygen transport from gills to the various peripheral tissues. This Somniosus microcephalus (Greenland sleeper shark) protein is Hemoglobin subunit alpha.